The sequence spans 369 residues: Anthranilate phosphoribosyltransferase (369 aa).

Residues G85, 88-89, T93, 95-98, 113-121, and S125 contribute to the 5-phospho-alpha-D-ribose 1-diphosphate site; these read GD, NLST, and KHGNRAASS. G85 lines the anthranilate pocket. S97 serves as a coordination point for Mg(2+). An anthranilate-binding site is contributed by N116. R171 lines the anthranilate pocket. Residues D229 and E230 each coordinate Mg(2+).

This sequence belongs to the anthranilate phosphoribosyltransferase family. Homodimer. Mg(2+) is required as a cofactor.

It catalyses the reaction N-(5-phospho-beta-D-ribosyl)anthranilate + diphosphate = 5-phospho-alpha-D-ribose 1-diphosphate + anthranilate. Its pathway is amino-acid biosynthesis; L-tryptophan biosynthesis; L-tryptophan from chorismate: step 2/5. In terms of biological role, catalyzes the transfer of the phosphoribosyl group of 5-phosphorylribose-1-pyrophosphate (PRPP) to anthranilate to yield N-(5'-phosphoribosyl)-anthranilate (PRA). This chain is Anthranilate phosphoribosyltransferase, found in Frankia alni (strain DSM 45986 / CECT 9034 / ACN14a).